A 357-amino-acid polypeptide reads, in one-letter code: Methylthioribose-1-phosphate isomerase (357 aa).

Substrate-binding positions include R49–A51, R89, and Q197. The active-site Proton donor is the D238. N248–K249 is a binding site for substrate.

This sequence belongs to the eIF-2B alpha/beta/delta subunits family. MtnA subfamily.

It carries out the reaction 5-(methylsulfanyl)-alpha-D-ribose 1-phosphate = 5-(methylsulfanyl)-D-ribulose 1-phosphate. Its pathway is amino-acid biosynthesis; L-methionine biosynthesis via salvage pathway; L-methionine from S-methyl-5-thio-alpha-D-ribose 1-phosphate: step 1/6. Its function is as follows. Catalyzes the interconversion of methylthioribose-1-phosphate (MTR-1-P) into methylthioribulose-1-phosphate (MTRu-1-P). The polypeptide is Methylthioribose-1-phosphate isomerase (Leptospira biflexa serovar Patoc (strain Patoc 1 / Ames)).